We begin with the raw amino-acid sequence, 1060 residues long: DNA topoisomerase 1 (1060 aa).

Residues 1–141 (MILVIAEKPN…KRMKFSALTK (141 aa)) enclose the Toprim domain. Residues Glu7 and Asp107 each coordinate Mg(2+). Positions 156 to 947 (NFGMANAGIA…EAKIRLTKIL (792 aa)) constitute a Topo IA-type catalytic domain. The tract at residues 196-201 (STGRVQ) is interaction with DNA. Residues 482–591 (LIGYLAGKGG…IKVYLQLLGI (110 aa)) form the DOD-type homing endonuclease domain. Tyr690 serves as the catalytic O-(5'-phospho-DNA)-tyrosine intermediate. The C4-type 1 zinc finger occupies 978 to 1006 (CPKCGGDLIVKYNEKTGKRFVGCSNWPKC). The C4-type 2; atypical zinc-finger motif lies at 1025–1050 (CCNGAPVVIIREKDGREWEICLDMNC).

Belongs to the type IA topoisomerase family. Monomer. Mg(2+) serves as cofactor. Post-translationally, this protein undergoes a protein self splicing that involves a post-translational excision of the intervening region (intein) followed by peptide ligation.

It carries out the reaction ATP-independent breakage of single-stranded DNA, followed by passage and rejoining.. Its function is as follows. Releases the supercoiling and torsional tension of DNA, which is introduced during the DNA replication and transcription, by transiently cleaving and rejoining one strand of the DNA duplex. Introduces a single-strand break via transesterification at a target site in duplex DNA. The scissile phosphodiester is attacked by the catalytic tyrosine of the enzyme, resulting in the formation of a DNA-(5'-phosphotyrosyl)-enzyme intermediate and the expulsion of a 3'-OH DNA strand. The free DNA strand then undergoes passage around the unbroken strand, thus removing DNA supercoils. Finally, in the religation step, the DNA 3'-OH attacks the covalent intermediate to expel the active-site tyrosine and restore the DNA phosphodiester backbone. The protein is DNA topoisomerase 1 (topA) of Pyrococcus furiosus (strain ATCC 43587 / DSM 3638 / JCM 8422 / Vc1).